A 390-amino-acid polypeptide reads, in one-letter code: GTPase Obg (390 aa).

Residues 1–159 (MKFVDEASIL…RELLLELMLL (159 aa)) form the Obg domain. The interval 127–147 (NTRFKSSVNRTPRQKTNGTPG) is disordered. Residues 129 to 145 (RFKSSVNRTPRQKTNGT) are compositionally biased toward polar residues. Positions 160-333 (ADVGMLGMPN…LCWDVMTFII (174 aa)) constitute an OBG-type G domain. GTP contacts are provided by residues 166-173 (GMPNAGKS), 191-195 (FTTLV), 213-216 (DIPG), 283-286 (NKID), and 314-316 (SAA). Mg(2+)-binding residues include S173 and T193.

The protein belongs to the TRAFAC class OBG-HflX-like GTPase superfamily. OBG GTPase family. Monomer. It depends on Mg(2+) as a cofactor.

It is found in the cytoplasm. An essential GTPase which binds GTP, GDP and possibly (p)ppGpp with moderate affinity, with high nucleotide exchange rates and a fairly low GTP hydrolysis rate. Plays a role in control of the cell cycle, stress response, ribosome biogenesis and in those bacteria that undergo differentiation, in morphogenesis control. In Escherichia coli (strain K12 / DH10B), this protein is GTPase Obg.